The chain runs to 671 residues: MKFAEHLTAHITPEWRKQYINYEEMKAMLYAAIEQSPSAELVEREMVTRYFAKFDEEFFHYCDKELAKINTFYSEKMAEATRKYGSLRSELTEALEMGHPKKLPAWKRRTPLGKKNVPARKIQDLKLAFSEFYLGLILLQNYQNLNFTGFRKILKKHDKLLSVDYGARWRTDHVEAAHFYTNKDIDRLIQETEQAVTQDIEGGDRQRAMKRLRVPPLGEQQSPWTTFKVGLFSGAFVVLFITVVIAAMFYGFGENWRAGMRMFRAPFLIIECLFLWGVNVYGWRSSGVNHVLIFELDPRNHLSEQNIMEVASVFGVIWACCVLSYIFCDPLGIPQYAAPLCLYTLMAAFLLNPTKTFHHEARFWAIRILIRVIMAPFCFVNFADFWLADQLNSMVPAFLDIPFLICFFGRSPTWHKAGKAASHCVEYVSLLHPIVAIMPAYFRFAQCIRRYRDTKESFPHLVNAAKYATSFFVVIFAHKYHTTTDTYPLSKENPWFYCWITAAIFSSCYAYTWDIKMDWGLFDSKAGDNRFLREEIVYSSTWFYYFGIIEDLILRFSWTLSMSLIEAGYIEGDVMMTILSPLEVFRRFIWNYFRLENEHLNNVGKFRAVRDISVAPMDCSDQTTILRMMDETDGVLNRRRGKAAGGKSATKKNKQEQRLLLQGESIEDLCS.

An important for promoting lysosomal/autophagosomal degradation of PXo bodies following inorganic phosphate (Pi) starvation region spans residues 1–193 (MKFAEHLTAH…DIDRLIQETE (193 aa)). Residues 1–228 (MKFAEHLTAH…EQQSPWTTFK (228 aa)) are Cytoplasmic-facing. In terms of domain architecture, SPX spans 2–218 (KFAEHLTAHI…MKRLRVPPLG (217 aa)). The tract at residues 152–159 (KILKKHDK) is important for inositol polyphosphate binding. The chain crosses the membrane as a helical span at residues 229 to 253 (VGLFSGAFVVLFITVVIAAMFYGFG). At 254-255 (EN) the chain is on the extracellular side. The helical transmembrane segment at 256–287 (WRAGMRMFRAPFLIIECLFLWGVNVYGWRSSG) threads the bilayer. Residues 288-300 (VNHVLIFELDPRN) lie on the Cytoplasmic side of the membrane. A helical membrane pass occupies residues 301 to 328 (HLSEQNIMEVASVFGVIWACCVLSYIFC). The Extracellular portion of the chain corresponds to 329–334 (DPLGIP). The chain crosses the membrane as a helical span at residues 335 to 356 (QYAAPLCLYTLMAAFLLNPTKT). Positions 357–374 (FHHEARFWAIRILIRVIM) form an intramembrane region, helical. Residues 375-379 (APFCF) lie on the Cytoplasmic side of the membrane. The chain crosses the membrane as a discontinuously helical span at residues 380-413 (VNFADFWLADQLNSMVPAFLDIPFLICFFGRSPT). The phosphate site is built by Asp-389 and Asn-392. At 414 to 415 (WH) the chain is on the extracellular side. Residues 416 to 455 (KAGKAASHCVEYVSLLHPIVAIMPAYFRFAQCIRRYRDTK) form a discontinuously helical membrane-spanning segment. An EXS domain is found at 423–627 (HCVEYVSLLH…DCSDQTTILR (205 aa)). A topological domain (cytoplasmic) is located at residue Glu-456. Residues 457–488 (SFPHLVNAAKYATSFFVVIFAHKYHTTTDTYP) traverse the membrane as a helical segment. Residues Lys-466 and Tyr-467 each coordinate phosphate. Residues 489-491 (LSK) are Extracellular-facing. The helical transmembrane segment at 492 to 519 (ENPWFYCWITAAIFSSCYAYTWDIKMDW) threads the bilayer. Residues 520-538 (GLFDSKAGDNRFLREEIVY) are Cytoplasmic-facing. The discontinuously helical transmembrane segment at 539–570 (SSTWFYYFGIIEDLILRFSWTLSMSLIEAGYI) threads the bilayer. Phosphate-binding residues include Arg-555, Arg-586, and Arg-587. A helical membrane pass occupies residues 571 to 609 (EGDVMMTILSPLEVFRRFIWNYFRLENEHLNNVGKFRAV). Residues 610 to 671 (RDISVAPMDC…QGESIEDLCS (62 aa)) lie on the Cytoplasmic side of the membrane.

The protein belongs to the SYG1 (TC 2.A.94) family. In terms of assembly, homodimer. Interacts with the FAR/SIN/STRIPAK complex members Cka and Pp2A-29B. In terms of tissue distribution, detected in PXo bodies found in the enterocytes and progenitors of the midgut and in the hindgut, but rarely occur in the Malpighian tubules, crop, brain, muscles and germlines (at protein level).

The protein resides in the membrane. The catalysed reaction is phosphate(in) = phosphate(out). Functionally, inorganic ion transporter that mediates phosphate ion export across the cell membrane. Plays a major role in phosphate homeostasis, preventing intracellular phosphate accumulation and possible calcium phosphate precipitation, ultimately preserving calcium signaling. Binds inositol hexakisphosphate (Ins6P) and similar inositol polyphosphates, such as 5-diphospho-inositol pentakisphosphate (5-InsP7), which are important intracellular signaling molecules involved in regulation of phosphate flux. In enterocytes and differentiating progenitors of the gut, promotes the biogenesis and maintenance of organelles called PXo bodies that store intracellular inorganic phosphate (Pi), and also regulates Cka-JNK mediated tissue homeostasis in response to Pi availability in these tissues. Under conditions of adequate Pi, transports Pi into PXo bodies which convert and store the Pi in the form of phospholipids. It also inhibits Cka at the post-transcriptional level to prevent Cka-bsk/JNK mediated cell proliferation. Upon Pi starvation, Pxo expression is down-regulated resulting in the PXo bodies decreasing in phospholipid content until they undergo lysosomal/autophagosomal degradation and release the stored Pi back into the cytosol for use by the cell. Decrease in Pxo expression also activates the Cka protein, which moves to the nucleus to activate bsk/JNK which then induces nearby progenitor cells to proliferate and form new absorptive cells, probably helping the organism to cope with the nutrient deficiency by maximizing absorption of dietary Pi. This is Solute carrier family 53 member 1 from Drosophila melanogaster (Fruit fly).